Consider the following 212-residue polypeptide: Probable GTP-binding protein EngB (212 aa).

The EngB-type G domain occupies 22 to 212 (GVSEFAFFGR…NILSLIAKRI (191 aa)). GTP is bound by residues 30–37 (GRSNAGKS), 57–61 (GMTRE), 95–98 (DLPG), 162–165 (TKAD), and 192–195 (ISSA). Mg(2+) is bound by residues serine 37 and threonine 59.

This sequence belongs to the TRAFAC class TrmE-Era-EngA-EngB-Septin-like GTPase superfamily. EngB GTPase family. Requires Mg(2+) as cofactor.

Functionally, necessary for normal cell division and for the maintenance of normal septation. In Treponema denticola (strain ATCC 35405 / DSM 14222 / CIP 103919 / JCM 8153 / KCTC 15104), this protein is Probable GTP-binding protein EngB.